A 354-amino-acid chain; its full sequence is Probable N-acetylmuramoyl-L-alanine amidase (354 aa).

A signal peptide spans 1–39 (MVKVINNFVKVNQYDRPGLKLAAVKGIVMHWTATPGASA). In terms of domain architecture, N-acetylmuramoyl-L-alanine amidase spans 40–152 (LNERNYFNGT…YDVTNKGCPT (113 aa)).

It belongs to the N-acetylmuramoyl-L-alanine amidase 2 family.

It localises to the secreted. The enzyme catalyses Hydrolyzes the link between N-acetylmuramoyl residues and L-amino acid residues in certain cell-wall glycopeptides.. The polypeptide is Probable N-acetylmuramoyl-L-alanine amidase (Bacillus licheniformis).